Here is a 248-residue protein sequence, read N- to C-terminus: Ribosomal RNA small subunit methyltransferase G (248 aa).

Residues G85, F90, 108–110 (DSS), 137–138 (AE), and R156 contribute to the S-adenosyl-L-methionine site.

This sequence belongs to the methyltransferase superfamily. RNA methyltransferase RsmG family.

The protein localises to the cytoplasm. Specifically methylates the N7 position of a guanine in 16S rRNA. This chain is Ribosomal RNA small subunit methyltransferase G, found in Prochlorococcus marinus (strain NATL1A).